We begin with the raw amino-acid sequence, 1364 residues long: Serine protease EatA (1364 aa).

The N-terminal stretch at 1-56 is a signal peptide; sequence MNKVFSLKYSFLAKGFIAVSELARRVSVKGKLKSASSIIISPITIAIVSYAPPSLA. The Peptidase S6 domain maps to 57–307; it reads ATVNADISYQ…VVTTQDFLHQ (251 aa). Residues His-134, Asp-162, and Ser-267 each act as charge relay system in the active site. Positions 1098–1364 constitute an Autotransporter domain; it reads DSQGDAGGWA…SINANFRYYF (267 aa).

In terms of processing, cleaved to release the mature protein from the outer membrane.

The protein localises to the periplasm. Its subcellular location is the secreted. The protein resides in the cell surface. It localises to the cell outer membrane. With respect to regulation, inhibited by phenylmethylsulfonyl fluoride. Functionally, autotransporter serine protease probably involved in virulence. This Escherichia coli O78:H11 (strain H10407 / ETEC) protein is Serine protease EatA (eatA).